Reading from the N-terminus, the 147-residue chain is Ponticulin-like protein C5 (147 aa).

An N-terminal signal peptide occupies residues 1–20; the sequence is MKLNNSLLLLIVAIIASSNA. Asn118 carries the GPI-like-anchor amidated asparagine lipid modification. The N-linked (GlcNAc...) asparagine glycan is linked to Asn118. Positions 119–147 are cleaved as a propeptide — removed in mature form; it reads SSESDSSDSTRIGASFALFALALLSMLAL.

Belongs to the ponticulin family. Post-translationally, the GPI-like-anchor contains a phosphoceramide group, rather than a phosphatidyl group.

Its subcellular location is the cell membrane. This is Ponticulin-like protein C5 (ponC5) from Dictyostelium discoideum (Social amoeba).